The primary structure comprises 76 residues: Sec-independent protein translocase protein TatA (76 aa).

A helical transmembrane segment spans residues 1–21; it reads MGSFSIWHWLIVLLIVVLVFG. Residues 44–76 are disordered; the sequence is RDGSTAPADPAQQVTANKSADANTVDVEAKQKS. The span at 55-65 shows a compositional bias: polar residues; it reads QQVTANKSADA.

It belongs to the TatA/E family. As to quaternary structure, the Tat system comprises two distinct complexes: a TatABC complex, containing multiple copies of TatA, TatB and TatC subunits, and a separate TatA complex, containing only TatA subunits. Substrates initially bind to the TatABC complex, which probably triggers association of the separate TatA complex to form the active translocon.

The protein resides in the cell inner membrane. Functionally, part of the twin-arginine translocation (Tat) system that transports large folded proteins containing a characteristic twin-arginine motif in their signal peptide across membranes. TatA could form the protein-conducting channel of the Tat system. The sequence is that of Sec-independent protein translocase protein TatA from Methylibium petroleiphilum (strain ATCC BAA-1232 / LMG 22953 / PM1).